Here is a 187-residue protein sequence, read N- to C-terminus: Phosphatidylethanolamine-binding protein 1 (187 aa).

An N-acetylalanine; in peptide hippocampal cholinergic neurostimulating modification is found at A2. S6 is modified (phosphoserine). Phosphothreonine is present on T42. S51, S52, S54, S98, and S132 each carry phosphoserine. Positions 93 to 134 (KGNDISSGTVLSDYVGSGPPSGTGLHRYVWLVYEQEQPLSCD) are interaction with RAF1.

The protein belongs to the phosphatidylethanolamine-binding protein family. Has a tendency to form dimers by disulfide cross-linking. Interacts with RAF1 and this interaction is enhanced if RAF1 is phosphorylated on residues 'Ser-338', 'Ser-339', 'Tyr-340' and 'Tyr-341'. Interacts with ALOX15; in response to IL13/interleukin-13, prevents the interaction of PEBP1 with RAF1 to activate the ERK signaling cascade. In terms of tissue distribution, HCNP is expressed in brain. Increased expression in aged senescence-accelerated mice.

It is found in the cytoplasm. Its function is as follows. Binds ATP, opioids and phosphatidylethanolamine. Has lower affinity for phosphatidylinositol and phosphatidylcholine. Serine protease inhibitor which inhibits thrombin, neuropsin and chymotrypsin but not trypsin, tissue type plasminogen activator and elastase. Inhibits the kinase activity of RAF1 by inhibiting its activation and by dissociating the RAF1/MEK complex and acting as a competitive inhibitor of MEK phosphorylation. HCNP may be involved in the function of the presynaptic cholinergic neurons of the central nervous system. HCNP increases the production of choline acetyltransferase but not acetylcholinesterase. Seems to be mediated by a specific receptor. This Mus musculus (Mouse) protein is Phosphatidylethanolamine-binding protein 1 (Pebp1).